Reading from the N-terminus, the 359-residue chain is Phospho-N-acetylmuramoyl-pentapeptide-transferase (359 aa).

Transmembrane regions (helical) follow at residues 3–23 (QILI…PALI), 55–75 (VAII…GLAF), 80–100 (ISAS…VGFL), 117–137 (TAKT…ALGF), 156–176 (IATV…VVSA), 187–207 (LDGL…LITF), 231–251 (LAIV…WNAA), 255–275 (IFMG…ISVT), 280–300 (ILAV…VLQI), and 334–354 (FWLL…GEWL).

Belongs to the glycosyltransferase 4 family. MraY subfamily. It depends on Mg(2+) as a cofactor.

It is found in the cell membrane. The enzyme catalyses UDP-N-acetyl-alpha-D-muramoyl-L-alanyl-gamma-D-glutamyl-meso-2,6-diaminopimeloyl-D-alanyl-D-alanine + di-trans,octa-cis-undecaprenyl phosphate = di-trans,octa-cis-undecaprenyl diphospho-N-acetyl-alpha-D-muramoyl-L-alanyl-D-glutamyl-meso-2,6-diaminopimeloyl-D-alanyl-D-alanine + UMP. The protein operates within cell wall biogenesis; peptidoglycan biosynthesis. Catalyzes the initial step of the lipid cycle reactions in the biosynthesis of the cell wall peptidoglycan: transfers peptidoglycan precursor phospho-MurNAc-pentapeptide from UDP-MurNAc-pentapeptide onto the lipid carrier undecaprenyl phosphate, yielding undecaprenyl-pyrophosphoryl-MurNAc-pentapeptide, known as lipid I. This is Phospho-N-acetylmuramoyl-pentapeptide-transferase from Mycobacterium avium (strain 104).